Here is a 159-residue protein sequence, read N- to C-terminus: Transcription repressor OFP6 (159 aa).

Residues 39-60 (PKRPSSTYRHCHSSISSATPSS) form a disordered region. Low complexity predominate over residues 51–60 (SSISSATPSS). An OVATE domain is found at 70–129 (VEKDSDDPYLDFRQSMLQMILENQIYSKDELRELLQCFLSLNSHYHHGIIVRAFSEIWED).

As to quaternary structure, interacts with KNAT1 and KNAT7. As to expression, expressed in roots, shoots, rosette and cauline leaves, stems, flower buds and siliques.

It localises to the nucleus. Transcriptional repressor that regulates multiple aspects of plant growth and development through the regulation of BEL1-LIKE (BLH) and KNOX TALE (KNAT) homeodomain transcription factors. This is Transcription repressor OFP6 (OFP6) from Arabidopsis thaliana (Mouse-ear cress).